The following is a 296-amino-acid chain: MSDKHINLVIVTGMSGAGKTVAIQSFEDLGYFTIDNMPPALVPKFLELIEQTNENRRVALVVDMRSRLFFKEINSTLDSIESNPSIDFRILFLDATDGELVSRYKETRRSHPLAADGRVLDGIRLERELLSPLKSMSQHVVDTTKLTPRQLRKTISDQFSEGSNQASLRIEVMSFGFKYGLPLDADLVFDVRFLPNPYYQVELREKTGLDEDVFNYVMSHPESEVFYKHLLNLIVPILPAYQKEGKSVLTVAIGCTGGQHRSVAFAHCLAESLATDWSVNESHRDQNRRKETVNRS.

An ATP-binding site is contributed by 13–20; the sequence is GMSGAGKT. 63–66 contributes to the GTP binding site; sequence DMRS.

This sequence belongs to the RapZ-like family.

Its function is as follows. Displays ATPase and GTPase activities. The sequence is that of Nucleotide-binding protein M6_Spy0559 from Streptococcus pyogenes serotype M6 (strain ATCC BAA-946 / MGAS10394).